The primary structure comprises 205 residues: MIGRLRGTLAEKQPPHLIIDVNGVGYELEVPMTTLYRLPKVGETVTVHTHLVVREDAHLLYGFAEKRERELFRELIRLNGVGPKLALALMSGLEVDELVRCVQAQDTSALVRVPGVGKKTAERLLVELKDRFKAWETSPAMFTLVSDGPLPVASESSAEADAVSALVSLGYKPQEASKAIAAIKDKAGLSSEELIRRSLKGMISK.

Positions 1-64 (MIGRLRGTLA…EDAHLLYGFA (64 aa)) are domain I. Positions 65-143 (EKRERELFRE…AWETSPAMFT (79 aa)) are domain II. Residues 144-154 (LVSDGPLPVAS) are flexible linker. The interval 154–205 (SESSAEADAVSALVSLGYKPQEASKAIAAIKDKAGLSSEELIRRSLKGMISK) is domain III.

Belongs to the RuvA family. As to quaternary structure, homotetramer. Forms an RuvA(8)-RuvB(12)-Holliday junction (HJ) complex. HJ DNA is sandwiched between 2 RuvA tetramers; dsDNA enters through RuvA and exits via RuvB. An RuvB hexamer assembles on each DNA strand where it exits the tetramer. Each RuvB hexamer is contacted by two RuvA subunits (via domain III) on 2 adjacent RuvB subunits; this complex drives branch migration. In the full resolvosome a probable DNA-RuvA(4)-RuvB(12)-RuvC(2) complex forms which resolves the HJ.

It localises to the cytoplasm. Functionally, the RuvA-RuvB-RuvC complex processes Holliday junction (HJ) DNA during genetic recombination and DNA repair, while the RuvA-RuvB complex plays an important role in the rescue of blocked DNA replication forks via replication fork reversal (RFR). RuvA specifically binds to HJ cruciform DNA, conferring on it an open structure. The RuvB hexamer acts as an ATP-dependent pump, pulling dsDNA into and through the RuvAB complex. HJ branch migration allows RuvC to scan DNA until it finds its consensus sequence, where it cleaves and resolves the cruciform DNA. The sequence is that of Holliday junction branch migration complex subunit RuvA from Pseudomonas putida (strain ATCC 47054 / DSM 6125 / CFBP 8728 / NCIMB 11950 / KT2440).